A 143-amino-acid polypeptide reads, in one-letter code: Large ribosomal subunit protein uL13 (143 aa).

The protein belongs to the universal ribosomal protein uL13 family. Part of the 50S ribosomal subunit.

In terms of biological role, this protein is one of the early assembly proteins of the 50S ribosomal subunit, although it is not seen to bind rRNA by itself. It is important during the early stages of 50S assembly. This is Large ribosomal subunit protein uL13 from Methylacidiphilum infernorum (isolate V4) (Methylokorus infernorum (strain V4)).